The following is a 100-amino-acid chain: UPF0213 protein YhbQ (100 aa).

A GIY-YIG domain is found at 2-77 (TPWFLYLIRT…KQLTKRQKER (76 aa)).

Belongs to the UPF0213 family.

The chain is UPF0213 protein YhbQ from Escherichia coli O17:K52:H18 (strain UMN026 / ExPEC).